Consider the following 195-residue polypeptide: Phosphoheptose isomerase (195 aa).

In terms of domain architecture, SIS spans 35–195 (IVSKILQAGN…IVEYNLFKME (161 aa)). Residue 51 to 53 (NGG) coordinates substrate. Histidine 60 and glutamate 64 together coordinate Zn(2+). Substrate-binding positions include glutamate 64, 95 to 96 (ND), 121 to 123 (STS), serine 126, and glutamine 173. The Zn(2+) site is built by glutamine 173 and histidine 181.

It belongs to the SIS family. GmhA subfamily. Requires Zn(2+) as cofactor.

The protein localises to the cytoplasm. It catalyses the reaction 2 D-sedoheptulose 7-phosphate = D-glycero-alpha-D-manno-heptose 7-phosphate + D-glycero-beta-D-manno-heptose 7-phosphate. Its pathway is carbohydrate biosynthesis; D-glycero-D-manno-heptose 7-phosphate biosynthesis; D-glycero-alpha-D-manno-heptose 7-phosphate and D-glycero-beta-D-manno-heptose 7-phosphate from sedoheptulose 7-phosphate: step 1/1. Functionally, catalyzes the isomerization of sedoheptulose 7-phosphate in D-glycero-D-manno-heptose 7-phosphate. The chain is Phosphoheptose isomerase from Leptospira interrogans serogroup Icterohaemorrhagiae serovar copenhageni (strain Fiocruz L1-130).